The chain runs to 98 residues: uncharacterized protein (98 aa).

This is an uncharacterized protein from Sulfolobus islandicus filamentous virus (isolate Iceland/Hveragerdi) (SIFV).